The following is a 100-amino-acid chain: Small ribosomal subunit protein uS14c (100 aa).

Belongs to the universal ribosomal protein uS14 family. As to quaternary structure, part of the 30S ribosomal subunit.

It localises to the plastid. It is found in the chloroplast. In terms of biological role, binds 16S rRNA, required for the assembly of 30S particles. This Psilotum nudum (Whisk fern) protein is Small ribosomal subunit protein uS14c.